A 413-amino-acid chain; its full sequence is Serine hydroxymethyltransferase (413 aa).

Residues L119 and 123 to 125 contribute to the (6S)-5,6,7,8-tetrahydrofolate site; that span reads GHL. K228 carries the N6-(pyridoxal phosphate)lysine modification. A (6S)-5,6,7,8-tetrahydrofolate-binding site is contributed by 351 to 353; it reads SPF.

It belongs to the SHMT family. Homodimer. Pyridoxal 5'-phosphate is required as a cofactor.

The protein localises to the cytoplasm. The enzyme catalyses (6R)-5,10-methylene-5,6,7,8-tetrahydrofolate + glycine + H2O = (6S)-5,6,7,8-tetrahydrofolate + L-serine. It participates in one-carbon metabolism; tetrahydrofolate interconversion. It functions in the pathway amino-acid biosynthesis; glycine biosynthesis; glycine from L-serine: step 1/1. Its function is as follows. Catalyzes the reversible interconversion of serine and glycine with tetrahydrofolate (THF) serving as the one-carbon carrier. This reaction serves as the major source of one-carbon groups required for the biosynthesis of purines, thymidylate, methionine, and other important biomolecules. Also exhibits THF-independent aldolase activity toward beta-hydroxyamino acids, producing glycine and aldehydes, via a retro-aldol mechanism. This Lysinibacillus sphaericus (strain C3-41) protein is Serine hydroxymethyltransferase.